Here is a 2003-residue protein sequence, read N- to C-terminus: Neurogenic locus notch homolog protein 4 (2003 aa).

An N-terminal signal peptide occupies residues 1 to 23; sequence MQPPSLLLLLLLLLLLCVSVVRP. EGF-like domains lie at 24–63, 64–115, 118–155, and 156–192; these read RGLL…ETCQ, FPDP…ERCQ, LEDP…EQCQ, and LRDF…HACE. Residues 24-1447 are Extracellular-facing; it reads RGLLCGSFPE…TAPPANQLPW (1424 aa). Cystine bridges form between C28–C41, C35–C51, C53–C62, C68–C80, C74–C103, C105–C114, C122–C133, C127–C143, C145–C154, C160–C171, C165–C180, C182–C191, C198–C211, C205–C220, C222–C231, C238–C249, C243–C262, C264–C273, C280–C291, C285–C300, C302–C311, C318–C332, C326–C341, C343–C352, C359–C370, C364–C379, C381–C390, C396–C407, C401–C418, C420–C429, C436–C452, C446–C461, C463–C472, C479–C490, C484–C499, C501–C510, C517–C528, C522–C537, C539–C548, C555–C566, C560–C575, C577–C586, C593–C604, C598–C613, C615–C624, C629–C640, C634–C649, and C651–C658. The region spanning 194 to 232 is the EGF-like 5; calcium-binding domain; the sequence is DVNECFQDPGPCPKGTSCHNTLGSFQCLCPVGQEGPRCE. In terms of domain architecture, EGF-like 6 spans 234–274; that stretch reads RAGPCPPRGCSNGGTCQLMPEKDSTFHLCLCPPGFIGPDCE. The region spanning 276 to 312 is the EGF-like 7; calcium-binding domain; that stretch reads NPDNCVSHQCQNGGTCQDGLDTYTCLCPETWTGWDCS. Residues 314 to 353 form the EGF-like 8; calcium-binding domain; the sequence is DVDECETQGPPHCRNGGTCQNSAGSFHCVCVSGWGGTSCE. An EGF-like 9; calcium-binding domain is found at 355-391; the sequence is NLDDCIAATCAPGSTCIDRVGSFSCLCPPGRTGLLCH. The 39-residue stretch at 392–430 folds into the EGF-like 10 domain; it reads LEDMCLSQPCHGDAQCSTNPLTGSTLCLCQPGYSGPTCH. The EGF-like 11; calcium-binding domain occupies 432–473; that stretch reads DLDECLMAQQGPSPCEHGGSCLNTPGSFNCLCPPGYTGSRCE. The 37-residue stretch at 475–511 folds into the EGF-like 12; calcium-binding domain; the sequence is DHNECLSQPCHPGSTCLDLLATFHCLCPPGLEGQLCE. One can recognise an EGF-like 13; calcium-binding domain in the interval 513–549; sequence ETNECASAPCLNHADCHDLLNGFQCICLPGFSGTRCE. In terms of domain architecture, EGF-like 14; calcium-binding spans 551–587; it reads DIDECRSSPCANGGQCQDQPGAFHCKCLPGFEGPRCQ. Positions 589-625 constitute an EGF-like 15; calcium-binding domain; the sequence is EVDECLSDPCPVGASCLDLPGAFFCLCPSGFTGQLCE. EGF-like domains follow at residues 626 to 659, 661 to 689, 691 to 727, 729 to 765, 767 to 803, 806 to 842, 844 to 880, 882 to 928, 930 to 966, 968 to 1004, 1006 to 1044, 1046 to 1085, 1087 to 1126, and 1130 to 1171; these read VPLC…PGCA, PEDN…PECE, ELGG…PTCS, EMTA…PQCQ, STDY…PRCE, LRPS…GSCQ, LMDL…PLCN, PLSS…SLCQ, HVNP…QNCS, ELDA…LRCE, DVDE…QWCE, EIDP…PTCS, RAPS…PDCL, and APKG…PRCQ. An N-linked (GlcNAc...) asparagine glycan is attached at N664. 47 disulfide bridges follow: C665-C672, C667-C677, C679-C688, C695-C706, C700-C715, C717-C726, C733-C744, C738-C753, C755-C764, C771-C782, C776-C791, C793-C802, C810-C821, C815-C830, C832-C841, C848-C859, C853-C868, C870-C879, C886-C907, C901-C916, C918-C927, C934-C945, C939-C954, C956-C965, C972-C983, C977-C992, C994-C1003, C1010-C1023, C1015-C1032, C1034-C1043, C1050-C1061, C1055-C1073, C1075-C1084, C1091-C1102, C1096-C1114, C1116-C1125, C1134-C1146, C1140-C1159, C1161-C1170, C1178-C1191, C1187-C1203, C1214-C1238, C1220-C1233, C1229-C1245, C1251-C1277, C1259-C1272, and C1268-C1284. N714 carries an N-linked (GlcNAc...) asparagine glycan. Residue N964 is glycosylated (N-linked (GlcNAc...) asparagine). N-linked (GlcNAc...) asparagine glycosylation is present at N1143. LNR repeat units follow at residues 1170 to 1213, 1214 to 1250, and 1251 to 1294; these read CQKP…PWKG, CPSH…TPPA, and CTPA…PEWG. Positions 1347–1371 are disordered; it reads AEEKLGGTRDPTYQERAAPQTQPLG. Residues 1448-1468 traverse the membrane as a helical segment; the sequence is PVLCSPVAGVILLALGALLVL. Residues 1469 to 2003 lie on the Cytoplasmic side of the membrane; it reads QLIRRRRREH…PINQGGEGKK (535 aa). A disordered region spans residues 1485–1508; that stretch reads PGFTRRPRTQSAPHRRRPPLGEDS. Basic residues predominate over residues 1489–1502; it reads RRPRTQSAPHRRRP. 5 ANK repeats span residues 1633 to 1665, 1666 to 1698, 1700 to 1732, 1733 to 1765, and 1766 to 1798; these read TGET…QPDR, AGRT…DART, DGTT…ARDK, WGKT…AQDN, and REQT…LRDQ. Disordered stretches follow at residues 1900-1927 and 1968-2003; these read LSGV…RPNP and PPPC…EGKK.

Belongs to the NOTCH family. In terms of assembly, heterodimer of a C-terminal fragment N(TM) and a N-terminal fragment N(EC) which are probably linked by disulfide bonds. Interacts with MAML1, MAML2 and MAML3 which act as transcriptional coactivators for NOTCH4. As to quaternary structure, (Microbial infection) Interacts with Epstein-Barr virus (EBV) RK-BARF0. Synthesized in the endoplasmic reticulum as an inactive form which is proteolytically cleaved by a furin-like convertase in the trans-Golgi network before it reaches the plasma membrane to yield an active, ligand-accessible form. Cleavage results in a C-terminal fragment N(TM) and a N-terminal fragment N(EC). Following ligand binding, it is cleaved by TNF-alpha converting enzyme (TACE) to yield a membrane-associated intermediate fragment called notch extracellular truncation (NEXT). This fragment is then cleaved by presenilin dependent gamma-secretase to release a notch-derived peptide containing the intracellular domain (NICD) from the membrane. Post-translationally, phosphorylated. Highly expressed in the heart, moderately in the lung and placenta and at low levels in the liver, skeletal muscle, kidney, pancreas, spleen, lymph node, thymus, bone marrow and fetal liver. No expression was seen in adult brain or peripheral blood leukocytes.

Its subcellular location is the cell membrane. The protein localises to the nucleus. In terms of biological role, functions as a receptor for membrane-bound ligands Jagged1, Jagged2 and Delta1 to regulate cell-fate determination. Upon ligand activation through the released notch intracellular domain (NICD) it forms a transcriptional activator complex with RBPJ/RBPSUH and activates genes of the enhancer of split locus. Affects the implementation of differentiation, proliferation and apoptotic programs. May regulate branching morphogenesis in the developing vascular system. The protein is Neurogenic locus notch homolog protein 4 of Homo sapiens (Human).